A 569-amino-acid chain; its full sequence is 2-succinyl-5-enolpyruvyl-6-hydroxy-3-cyclohexene-1-carboxylate synthase (569 aa).

It belongs to the TPP enzyme family. MenD subfamily. In terms of assembly, homodimer. It depends on Mg(2+) as a cofactor. Requires Mn(2+) as cofactor. Thiamine diphosphate is required as a cofactor.

The catalysed reaction is isochorismate + 2-oxoglutarate + H(+) = 5-enolpyruvoyl-6-hydroxy-2-succinyl-cyclohex-3-ene-1-carboxylate + CO2. The protein operates within quinol/quinone metabolism; 1,4-dihydroxy-2-naphthoate biosynthesis; 1,4-dihydroxy-2-naphthoate from chorismate: step 2/7. Its pathway is quinol/quinone metabolism; menaquinone biosynthesis. Its function is as follows. Catalyzes the thiamine diphosphate-dependent decarboxylation of 2-oxoglutarate and the subsequent addition of the resulting succinic semialdehyde-thiamine pyrophosphate anion to isochorismate to yield 2-succinyl-5-enolpyruvyl-6-hydroxy-3-cyclohexene-1-carboxylate (SEPHCHC). The protein is 2-succinyl-5-enolpyruvyl-6-hydroxy-3-cyclohexene-1-carboxylate synthase of Haemophilus ducreyi (strain 35000HP / ATCC 700724).